The primary structure comprises 477 residues: Transposase for insertion sequence element IS231F (477 aa).

It belongs to the transposase 11 family.

Involved in the transposition of the insertion sequence. This Bacillus thuringiensis subsp. israelensis protein is Transposase for insertion sequence element IS231F.